Here is a 332-residue protein sequence, read N- to C-terminus: 3-dehydrosphinganine reductase (332 aa).

Positions 1-25 (MLLVVAAFIVAFVLLLYMISPLISP) are cleaved as a signal peptide. Residues Gly39, Ser41, Ser42, Gly43, Arg64, Asp65, Lys68, and Asp93 each contribute to the NADPH site. Positions 39–43 (GGSSG) match the GXSXG motif. The Proton donor role is filled by Ser172. The active-site Proton acceptor is Tyr186. NADP(+) is bound by residues Tyr186 and Lys190. Catalysis depends on Lys190, which acts as the Lowers pKa of active site Tyr.

It belongs to the short-chain dehydrogenases/reductases (SDR) family.

The protein localises to the endoplasmic reticulum. It carries out the reaction sphinganine + NADP(+) = 3-oxosphinganine + NADPH + H(+). The protein operates within lipid metabolism; sphingolipid metabolism. Functionally, catalyzes the reduction of 3'-oxosphinganine (3-ketodihydrosphingosine/KDS) to sphinganine (dihydrosphingosine/DHS), the second step of de novo sphingolipid biosynthesis. This chain is 3-dehydrosphinganine reductase (kdsr), found in Danio rerio (Zebrafish).